Reading from the N-terminus, the 411-residue chain is O-glucosyltransferase rumi (411 aa).

The N-terminal stretch at 1 to 20 (MLINHLIVVLLISLVGTGGA) is a signal peptide. Intrachain disulfides connect Cys64-Cys75, Cys73-Cys378, Cys120-Cys126, and Cys282-Cys305. Asp151 (proton donor/acceptor) is an active-site residue. Residues 192–197 (ATKLHP) form an interaction with the consensus sequence C-X-S-X-[PA]-C in peptide substrates region. UDP-alpha-D-glucose contacts are provided by residues 229–233 (RGSRT), Arg237, 276–278 (VSF), and 294–298 (AASFR). The Prevents secretion from ER motif lies at 408–411 (KDEL).

This sequence belongs to the glycosyltransferase 90 family.

The protein resides in the endoplasmic reticulum lumen. The protein operates within protein modification; protein glycosylation. Functionally, protein O-glucosyltransferase. Catalyzes the reaction that attaches glucose through an O-glycosidic linkage to a conserved serine residue found in the consensus sequence C-X-S-X-[PA]-C in epidermal growth factor-like repeats. Regulates Notch signaling by glucosylating Notch in the ER, glucosylation is required for the correct folding and cleavage of Notch. The protein is O-glucosyltransferase rumi of Drosophila melanogaster (Fruit fly).